A 294-amino-acid polypeptide reads, in one-letter code: Shikimate dehydrogenase (NADP(+)) (294 aa).

Shikimate contacts are provided by residues 22-24 and S69; that span reads SLS. K73 functions as the Proton acceptor in the catalytic mechanism. N94 and D111 together coordinate shikimate. Residues 135 to 139 and L236 contribute to the NADP(+) site; that span reads GAGGA. Y238 provides a ligand contact to shikimate. Residue G260 participates in NADP(+) binding.

This sequence belongs to the shikimate dehydrogenase family. Homodimer.

The enzyme catalyses shikimate + NADP(+) = 3-dehydroshikimate + NADPH + H(+). The protein operates within metabolic intermediate biosynthesis; chorismate biosynthesis; chorismate from D-erythrose 4-phosphate and phosphoenolpyruvate: step 4/7. In terms of biological role, involved in the biosynthesis of the chorismate, which leads to the biosynthesis of aromatic amino acids. Catalyzes the reversible NADPH linked reduction of 3-dehydroshikimate (DHSA) to yield shikimate (SA). The protein is Shikimate dehydrogenase (NADP(+)) of Streptococcus equi subsp. zooepidemicus (strain H70).